An 88-amino-acid polypeptide reads, in one-letter code: Acyl-CoA-binding domain-containing protein 7 (88 aa).

The ACB domain occupies 3–88 (LQADFDRAAE…AKELIEKYGI (86 aa)). An acyl-CoA is bound by residues Arg-15, 30–34 (YGLYK), Lys-56, and Tyr-75.

It belongs to the ACBD7 family.

Functionally, binds medium- and long-chain acyl-CoA esters. This Homo sapiens (Human) protein is Acyl-CoA-binding domain-containing protein 7 (ACBD7).